A 141-amino-acid chain; its full sequence is Granulocyte-macrophage colony-stimulating factor (141 aa).

The N-terminal stretch at 1–17 (MWLQNLLFLGIVVYSLS) is a signal peptide. The O-linked (GalNAc...) serine glycan is linked to S22. An O-linked (GalNAc...) threonine glycan is attached at T27. Cystine bridges form between C68–C110 and C102–C135. N-linked (GlcNAc...) asparagine glycosylation is found at N83 and N92.

Belongs to the GM-CSF family. In terms of assembly, monomer. The signaling GM-CSF receptor complex is a dodecamer of two head-to-head hexamers of two alpha, two beta, and two ligand subunits.

The protein resides in the secreted. Its function is as follows. Cytokine that stimulates the growth and differentiation of hematopoietic precursor cells from various lineages, including granulocytes, macrophages, eosinophils and erythrocytes. This chain is Granulocyte-macrophage colony-stimulating factor (Csf2), found in Mus musculus (Mouse).